A 656-amino-acid chain; its full sequence is Protein NO VEIN-LIKE (656 aa).

Positions Asp-283–Ala-375 are disordered. Positions Glu-299–Val-308 are enriched in acidic residues. The span at Glu-342–Lys-353 shows a compositional bias: basic and acidic residues. Positions Leu-354–Ile-371 are enriched in basic residues.

This Arabidopsis thaliana (Mouse-ear cress) protein is Protein NO VEIN-LIKE.